Consider the following 23-residue polypeptide: Conolysin-Mt1 (23 aa).

At S22 the chain carries Serine amide.

As to expression, expressed by the venom duct.

The protein resides in the secreted. Its function is as follows. This cytolytic peptide has ability to disrupt the integrity of cell membranes from both prokaryotes and eukaryotes. It permeabilizes both negatively charged prokaryotic (PE:PG) and zwitterionic eukaryotic (PC:cholesterol) model membranes. It has potent hemolytic activity on human erythrocytes and exhibits low antimicrobial activity against the Gram-negative bacterium E.coli (MIC&gt;50 uM) and the Gram-positive bacterium S.aureus (MIC=25-50 uM). Intracranial injection causes mice to shuffle backward until the encounter an obstacle, at which time the mouse jump into the air. The backward shuffle is reminiscent to the signature dance 'moonwalk' that gained widespread popularity after being performed by Michael Jackson. In Conus mustelinus (Weasel cone), this protein is Conolysin-Mt1.